A 168-amino-acid polypeptide reads, in one-letter code: MPRSRINGNFIDKTFSIVANILLRIIPTTSGEKEAFTYYRDGMSAQSEGNYAEALQNYYEAMRLEIDPYDRSYILYNIGLIHTSNGEHTKALEYYFRALERNPFLPQAFNNMAVICHYRGEQAIRQGDSEIAEAWFDQAAEYWKQAIALTPGNYIEAQNWLKITRRFE.

3 TPR repeats span residues 35-68 (AFTY…EIDP), 72-105 (SYIL…NPFL), and 120-153 (GEQA…TPGN).

Belongs to the Ycf3 family.

The protein resides in the plastid. It is found in the chloroplast thylakoid membrane. Essential for the assembly of the photosystem I (PSI) complex. May act as a chaperone-like factor to guide the assembly of the PSI subunits. The chain is Photosystem I assembly protein Ycf3 from Oenothera elata subsp. hookeri (Hooker's evening primrose).